A 176-amino-acid polypeptide reads, in one-letter code: Acireductone dioxygenase (176 aa).

Fe(2+) is bound by residues histidine 100, histidine 102, glutamate 106, and histidine 145. Positions 100, 102, 106, and 145 each coordinate Ni(2+).

This sequence belongs to the acireductone dioxygenase (ARD) family. In terms of assembly, monomer. It depends on Fe(2+) as a cofactor. Ni(2+) serves as cofactor.

It carries out the reaction 1,2-dihydroxy-5-(methylsulfanyl)pent-1-en-3-one + O2 = 3-(methylsulfanyl)propanoate + CO + formate + 2 H(+). The catalysed reaction is 1,2-dihydroxy-5-(methylsulfanyl)pent-1-en-3-one + O2 = 4-methylsulfanyl-2-oxobutanoate + formate + 2 H(+). Its pathway is amino-acid biosynthesis; L-methionine biosynthesis via salvage pathway; L-methionine from S-methyl-5-thio-alpha-D-ribose 1-phosphate: step 5/6. In terms of biological role, catalyzes 2 different reactions between oxygen and the acireductone 1,2-dihydroxy-3-keto-5-methylthiopentene (DHK-MTPene) depending upon the metal bound in the active site. Fe-containing acireductone dioxygenase (Fe-ARD) produces formate and 2-keto-4-methylthiobutyrate (KMTB), the alpha-ketoacid precursor of methionine in the methionine recycle pathway. Ni-containing acireductone dioxygenase (Ni-ARD) produces methylthiopropionate, carbon monoxide and formate, and does not lie on the methionine recycle pathway. The chain is Acireductone dioxygenase from Bacillus pumilus (strain SAFR-032).